The sequence spans 796 residues: Protein translocase subunit SecA 2 (796 aa).

ATP contacts are provided by residues Q84, 102-106 (GEGKT), and D496.

It belongs to the SecA family. Monomer and homodimer. Part of the essential Sec protein translocation apparatus which comprises SecA, SecYEG and auxiliary proteins SecDF. Other proteins may also be involved.

Its subcellular location is the cell membrane. It localises to the cytoplasm. The enzyme catalyses ATP + H2O + cellular proteinSide 1 = ADP + phosphate + cellular proteinSide 2.. In terms of biological role, part of the Sec protein translocase complex. Interacts with the SecYEG preprotein conducting channel. Has a central role in coupling the hydrolysis of ATP to the transfer of proteins into and across the cell membrane, serving as an ATP-driven molecular motor driving the stepwise translocation of polypeptide chains across the membrane. The chain is Protein translocase subunit SecA 2 from Staphylococcus aureus (strain MRSA252).